A 339-amino-acid polypeptide reads, in one-letter code: Purple acid phosphatase 4 (339 aa).

Residues 1–31 (MSSKFDIGSLSIVMTLLICFLLLSLAPKLEA) form the signal peptide. D53 provides a ligand contact to Fe cation. N-linked (GlcNAc...) asparagine glycosylation is present at N61. 2 residues coordinate Fe cation: D86 and Y89. A Zn(2+)-binding site is contributed by D86. The Zn(2+) site is built by N124 and H218. H227 (proton donor) is an active-site residue. A Zn(2+)-binding site is contributed by H253. Residue 253–255 (HDH) participates in substrate binding. H255 serves as a coordination point for Fe cation. N-linked (GlcNAc...) asparagine glycosylation occurs at N284.

This sequence belongs to the metallophosphoesterase superfamily. Purple acid phosphatase family. Homodimer. The cofactor is Fe cation. Requires Zn(2+) as cofactor. Expressed in roots, stems, leaves, flowers and siliques.

Its subcellular location is the secreted. The catalysed reaction is a phosphate monoester + H2O = an alcohol + phosphate. In Arabidopsis thaliana (Mouse-ear cress), this protein is Purple acid phosphatase 4 (PAP4).